A 669-amino-acid chain; its full sequence is MNNPTNESLRNVAIVGPYGSGKTTLLESVLWVSGSVSRKGNIKDGNTVSDSSPEAKARQMSVEVSVAGIDYENLRLNFLDCPGSIEFAQETYGALVGAGTAVIVCEADVSRVLTLAPLFKFLDDWAIPHLVFINKMDRAKQPFGEVLQALKSVSSRPLIPQQYPIYKGEELQGYIDLITEQAYQYHTGSAADPIALPAELAGAEHQARQEMLEALADFDDRLLEELLEEVEPPQAEIEADFKQELGADLIVPVVLGAAEQDFGVRPLLDVLIKEAPDPSVTAARRSLSTDGSGPVIAQVLKTYFTPQGRLSLARIWQGTLREADSLNGQRLGGIYRLFGNQQTPVQTATVGEIVGLARLENINTGTTLSTADVKPLPFVEPLPPVYGLAIAPEQRKDEVKLSTALGKLVEEDPSLTWEQNTETQEVILWGQGEIHLKVALERLERQYKLPMVSQQPQVPYKETIRKGTEVHGRYKHQTGGHGAFGDVYLTIKPLERGNGFSFSETIVGGVVPKQYIPGVEMGVREYLAKGPLGYPVVDIAVTLTDGSYHNVDSSEQAFKQAARLAMTEGMPQCNPVLLEPILSVNVTTPTEFTSRVLQLVSGHRGQILGYEARSDWKSWDQVAAHLPQAEMQNFIIELRSLTLGVGNFTWQSDHLQEVPDKFAPNLRPD.

In terms of domain architecture, tr-type G spans 7-279 (ESLRNVAIVG…VLIKEAPDPS (273 aa)). Residues 16–23 (GPYGSGKT) are G1. 16 to 23 (GPYGSGKT) provides a ligand contact to GTP. Residues 59–63 (QMSVE) form a G2 region. The tract at residues 80–83 (DCPG) is G3. Residues 80-84 (DCPGS) and 134-137 (NKMD) contribute to the GTP site. The G4 stretch occupies residues 134–137 (NKMD). Positions 257–259 (AAE) are G5.

It belongs to the TRAFAC class translation factor GTPase superfamily. Classic translation factor GTPase family. EF-G/EF-2 subfamily.

The protein is Elongation factor G-like protein of Synechocystis sp. (strain ATCC 27184 / PCC 6803 / Kazusa).